Consider the following 448-residue polypeptide: Tubulin beta chain (448 aa).

GTP is bound by residues Gln11, Glu69, Ser138, Gly142, Thr143, Gly144, Asn204, and Asn226. Residue Glu69 participates in Mg(2+) binding. The interval 425–448 (YQDASISEGEEEYLEEEEPLEHEE) is disordered. The span at 432–448 (EGEEEYLEEEEPLEHEE) shows a compositional bias: acidic residues.

This sequence belongs to the tubulin family. In terms of assembly, dimer of alpha and beta chains. A typical microtubule is a hollow water-filled tube with an outer diameter of 25 nm and an inner diameter of 15 nM. Alpha-beta heterodimers associate head-to-tail to form protofilaments running lengthwise along the microtubule wall with the beta-tubulin subunit facing the microtubule plus end conferring a structural polarity. Microtubules usually have 13 protofilaments but different protofilament numbers can be found in some organisms and specialized cells. Mg(2+) is required as a cofactor.

It is found in the cytoplasm. It localises to the cytoskeleton. Functionally, tubulin is the major constituent of microtubules, a cylinder consisting of laterally associated linear protofilaments composed of alpha- and beta-tubulin heterodimers. Microtubules grow by the addition of GTP-tubulin dimers to the microtubule end, where a stabilizing cap forms. Below the cap, tubulin dimers are in GDP-bound state, owing to GTPase activity of alpha-tubulin. This is Tubulin beta chain (benR) from Aspergillus parasiticus.